The chain runs to 109 residues: Tektin-3 (109 aa).

Belongs to the tektin family. Microtubule inner protein component of sperm flagellar doublet microtubules. Interacts with TEKT1, TEKT2, TEKT4 and TEKT5. Interacts with CCDC38. Post-translationally, N- and O-glycosylated. May be proteolytically processed during the epididymal transit of spermatozoa. In terms of processing, ubiquitinated, leading to its degradation. Deubiquitinated by USP16, promoting its stability.

It is found in the cytoplasm. The protein localises to the cytoskeleton. Its subcellular location is the cilium axoneme. It localises to the flagellum axoneme. The protein resides in the cytoplasmic vesicle. It is found in the secretory vesicle. The protein localises to the acrosome outer membrane. Its function is as follows. Microtubule inner protein (MIP) part of the dynein-decorated doublet microtubules (DMTs) in cilia and flagellar axoneme. Forms filamentous polymers in the walls of ciliary and flagellar microtubules. Required for normal sperm mobility. The polypeptide is Tektin-3 (Mesocricetus auratus (Golden hamster)).